We begin with the raw amino-acid sequence, 227 residues long: Cytochrome c oxidase subunit 2 (227 aa).

Residues methionine 1 to serine 14 are Mitochondrial intermembrane-facing. Residues proline 15 to methionine 45 traverse the membrane as a helical segment. Topologically, residues leucine 46 to glutamine 59 are mitochondrial matrix. Residues glycine 60–methionine 87 form a helical membrane-spanning segment. Residues aspartate 88–isoleucine 227 lie on the Mitochondrial intermembrane side of the membrane. The Cu cation site is built by histidine 161, cysteine 196, glutamate 198, cysteine 200, histidine 204, and methionine 207. Residue glutamate 198 coordinates Mg(2+).

It belongs to the cytochrome c oxidase subunit 2 family. Component of the cytochrome c oxidase (complex IV, CIV), a multisubunit enzyme composed of 14 subunits. The complex is composed of a catalytic core of 3 subunits MT-CO1, MT-CO2 and MT-CO3, encoded in the mitochondrial DNA, and 11 supernumerary subunits COX4I, COX5A, COX5B, COX6A, COX6B, COX6C, COX7A, COX7B, COX7C, COX8 and NDUFA4, which are encoded in the nuclear genome. The complex exists as a monomer or a dimer and forms supercomplexes (SCs) in the inner mitochondrial membrane with NADH-ubiquinone oxidoreductase (complex I, CI) and ubiquinol-cytochrome c oxidoreductase (cytochrome b-c1 complex, complex III, CIII), resulting in different assemblies (supercomplex SCI(1)III(2)IV(1) and megacomplex MCI(2)III(2)IV(2)). Found in a complex with TMEM177, COA6, COX18, COX20, SCO1 and SCO2. Interacts with TMEM177 in a COX20-dependent manner. Interacts with COX20. Interacts with COX16. The cofactor is Cu cation.

It is found in the mitochondrion inner membrane. It catalyses the reaction 4 Fe(II)-[cytochrome c] + O2 + 8 H(+)(in) = 4 Fe(III)-[cytochrome c] + 2 H2O + 4 H(+)(out). Its function is as follows. Component of the cytochrome c oxidase, the last enzyme in the mitochondrial electron transport chain which drives oxidative phosphorylation. The respiratory chain contains 3 multisubunit complexes succinate dehydrogenase (complex II, CII), ubiquinol-cytochrome c oxidoreductase (cytochrome b-c1 complex, complex III, CIII) and cytochrome c oxidase (complex IV, CIV), that cooperate to transfer electrons derived from NADH and succinate to molecular oxygen, creating an electrochemical gradient over the inner membrane that drives transmembrane transport and the ATP synthase. Cytochrome c oxidase is the component of the respiratory chain that catalyzes the reduction of oxygen to water. Electrons originating from reduced cytochrome c in the intermembrane space (IMS) are transferred via the dinuclear copper A center (CU(A)) of subunit 2 and heme A of subunit 1 to the active site in subunit 1, a binuclear center (BNC) formed by heme A3 and copper B (CU(B)). The BNC reduces molecular oxygen to 2 water molecules using 4 electrons from cytochrome c in the IMS and 4 protons from the mitochondrial matrix. The sequence is that of Cytochrome c oxidase subunit 2 (MT-CO2) from Acomys ignitus (Fiery spiny mouse).